Reading from the N-terminus, the 115-residue chain is Large ribosomal subunit protein bL20 (115 aa).

The protein belongs to the bacterial ribosomal protein bL20 family.

Its function is as follows. Binds directly to 23S ribosomal RNA and is necessary for the in vitro assembly process of the 50S ribosomal subunit. It is not involved in the protein synthesizing functions of that subunit. The sequence is that of Large ribosomal subunit protein bL20 from Chlorobium phaeobacteroides (strain DSM 266 / SMG 266 / 2430).